A 95-amino-acid chain; its full sequence is Large ribosomal subunit protein bL27 (95 aa).

Residues 1 to 9 constitute a propeptide that is removed on maturation; that stretch reads MLNMNLQFF.

The protein belongs to the bacterial ribosomal protein bL27 family. In terms of processing, the N-terminus is cleaved by ribosomal processing cysteine protease Prp.

The sequence is that of Large ribosomal subunit protein bL27 from Agathobacter rectalis (strain ATCC 33656 / DSM 3377 / JCM 17463 / KCTC 5835 / VPI 0990) (Eubacterium rectale).